The sequence spans 154 residues: Keratin-associated protein 9-4 (154 aa).

Tandem repeats lie at residues 8–12 (CCQPT), 13–17 (CCRTT), 18–22 (CCRTT), 37–41 (CCQPS), 42–46 (CCVSS), 51–55 (CCRPT), 56–60 (CCQNT), 61–65 (CCQPT), 70–74 (CCQPS), 75–79 (CCSTP), 80–84 (CCQPT), 85–89 (CCGSS), 129–133 (CCRPA), 134–138 (CCETT), and 148–152 (CCQPF). Positions 8-152 (CCQPTCCRTT…TCVSSCCQPF (145 aa)) are 15 X 5 AA repeats of C-C-[RQVGE]-[SPTN]-[TASPF].

Belongs to the KRTAP type 9 family. In terms of assembly, interacts with hair keratins.

In terms of biological role, in the hair cortex, hair keratin intermediate filaments are embedded in an interfilamentous matrix, consisting of hair keratin-associated proteins (KRTAP), which are essential for the formation of a rigid and resistant hair shaft through their extensive disulfide bond cross-linking with abundant cysteine residues of hair keratins. The matrix proteins include the high-sulfur and high-glycine-tyrosine keratins. This chain is Keratin-associated protein 9-4 (KRTAP9-4), found in Homo sapiens (Human).